The primary structure comprises 120 residues: MITKADKNATRKKRHARVRAKLTGTAERPRLNVFRSNQHIYAQVIDDVNGVTLVSASTLDKDLALNGTSNIEAATKVGESVAKRAVEKGVKEVVFDRGGYLYHGRVKALAEAAREAGLQF.

Belongs to the universal ribosomal protein uL18 family. As to quaternary structure, part of the 50S ribosomal subunit; part of the 5S rRNA/L5/L18/L25 subcomplex. Contacts the 5S and 23S rRNAs.

In terms of biological role, this is one of the proteins that bind and probably mediate the attachment of the 5S RNA into the large ribosomal subunit, where it forms part of the central protuberance. In Bacillus cereus (strain ATCC 10987 / NRS 248), this protein is Large ribosomal subunit protein uL18.